We begin with the raw amino-acid sequence, 494 residues long: MIQVLLVTICLAVFPFQGSSKTLKSGNVNDYEVVNPQKITGLPVGAFKQPEKKYEDAVQYEFEVNGEPVVLHLEKNKGLFSEDYSETHYSPDGSEITTNPPVEDHCYYHGRVQNDADSTASISTCNGLKGFFTLRGETYLIEPLKVPDSESHAVYKYEDAKKKDEAPKMCGVTLTNWESDEPIKKASHLVATSEQQHFHPRYVQLVIVADHSMVTKNNNDLTALTTWIHQIVNDMIVMYRILNIHITLANVEIWSSGDLIAVTSSAPTTLRSFGEWRARNLVNRITHDNAQLITAVHLDNLIGYGYLGTMCDPQSSVAITEDHSTDHLWVAATMAHEMGHNLGMNHDGNQCNCGAAGCIMSAIISQYRSYQFSDCSMNEYRNYITTHNPPCILNQALRTDTVSTPVSENELLQNSVNPCYDPVTCQPKEKEDCESGPCCDNCKFLKEGTICKMARGDNMHDYCNGKTCDCPRNPYKGEHDPMEWPAPAKGSVLM.

A signal peptide spans 1–20; it reads MIQVLLVTICLAVFPFQGSS. The propeptide occupies 21–193; sequence KTLKSGNVND…KKASHLVATS (173 aa). The Peptidase M12B domain occupies 201 to 396; the sequence is RYVQLVIVAD…HNPPCILNQA (196 aa). Cystine bridges form between cysteine 311–cysteine 391, cysteine 351–cysteine 375, and cysteine 353–cysteine 358. A Zn(2+)-binding site is contributed by histidine 336. Glutamate 337 is a catalytic residue. 2 residues coordinate Zn(2+): histidine 340 and histidine 346. The propeptide occupies 410-431; it reads ELLQNSVNPCYDPVTCQPKEKE. One can recognise a Disintegrin domain in the interval 417 to 478; sequence NPCYDPVTCQ…DCPRNPYKGE (62 aa). 4 disulfide bridges follow: cysteine 433-cysteine 442, cysteine 438-cysteine 463, cysteine 439-cysteine 468, and cysteine 451-cysteine 470. The Cell attachment site motif lies at 455 to 457; the sequence is RGD. Residues 482–494 constitute a propeptide that is removed on maturation; that stretch reads MEWPAPAKGSVLM.

This sequence belongs to the venom metalloproteinase (M12B) family. P-II subfamily. P-IIa sub-subfamily. In terms of assembly, monomer (disintegrin). In terms of tissue distribution, expressed by the venom gland.

The protein localises to the secreted. Functionally, impairs hemostasis in the envenomed animal. Inhibits ADP-induced platelet aggregation (IC(50)=168 nM). Inhibits alpha-5/beta-1 (ITGA5/ITGB1) integrin and induces the expression of a ligand-induced binding site epitope on beta-1 integrin subunit. Has a direct chemotactic stimulus on human neutrophils in vitro. This is Zinc metalloproteinase/disintegrin from Echis ocellatus (Ocellated saw-scaled viper).